Here is a 597-residue protein sequence, read N- to C-terminus: Vacuolar protein sorting-associated protein 33A (597 aa).

It belongs to the STXBP/unc-18/SEC1 family. Core component of at least two putative endosomal tethering complexes, the homotypic fusion and vacuole protein sorting (HOPS) complex and the class C core vacuole/endosome tethering (CORVET) complex. Their common core is composed of the class C Vps proteins VPS11, VPS16, VPS18 and VPS33A, which in HOPS further associates with VPS39 and VPS41 and in CORVET with VPS8 and TGFBRAP1. Interacts with RAB5C, UVRAG, STX17, MON1A and MON1B. Associates with adaptor protein complex 3 (AP-3) and clathrin. Interacts with PLEKHM1. As to expression, ubiquitous.

The protein localises to the cytoplasmic vesicle. Its subcellular location is the late endosome membrane. The protein resides in the lysosome membrane. It is found in the early endosome. It localises to the autophagosome. The protein localises to the clathrin-coated vesicle. Functionally, plays a role in vesicle-mediated protein trafficking to lysosomal compartments including the endocytic membrane transport and autophagic pathways. Believed to act as a core component of the putative HOPS and CORVET endosomal tethering complexes which are proposed to be involved in the Rab5-to-Rab7 endosome conversion probably implicating MON1A/B, and via binding SNAREs and SNARE complexes to mediate tethering and docking events during SNARE-mediated membrane fusion. The HOPS complex is proposed to be recruited to Rab7 on the late endosomal membrane and to regulate late endocytic, phagocytic and autophagic traffic towards lysosomes. The CORVET complex is proposed to function as a Rab5 effector to mediate early endosome fusion probably in specific endosome subpopulations. Required for fusion of endosomes and autophagosomes with lysosomes; the function is dependent on its association with VPS16 but not VIPAS39. The function in autophagosome-lysosome fusion implicates STX17 but not UVRAG. This Rattus norvegicus (Rat) protein is Vacuolar protein sorting-associated protein 33A (Vps33a).